The sequence spans 907 residues: Epidermal growth factor receptor substrate 15-like 1 (907 aa).

Alanine 2 is subject to N-acetylalanine. An EH 1 domain is found at 15–104 (GNPLYESYYK…SLTMPPPKFH (90 aa)). The tract at residues 15-368 (GNPLYESYYK…PSERGTPIPD (354 aa)) is interaction with DAB2. An EF-hand 1 domain is found at 48–83 (LSDIILGKIWDLADPEGKGFLDKQGFYVALRLVACA). At tyrosine 74 the chain carries Phosphotyrosine. Residues serine 107 and serine 108 each carry the phosphoserine modification. Residues 127–215 (EKAKFDGIFE…PPLIPPSKRK (89 aa)) enclose the EH 2 domain. The EF-hand 2 domain occupies 159–194 (LPLDVLGRVWDLSDIDKDGHLDRDEFAVAMHLVYRA). Ca(2+)-binding residues include aspartate 172, aspartate 174, aspartate 176, histidine 178, and glutamate 183. 5 positions are modified to phosphoserine: serine 229, serine 244, serine 253, serine 255, and serine 259. The tract at residues 229-260 (SPPPKDSLRSTPSHGSVSSLNSTGSLSPKHSV) is disordered. Residues 241–255 (SHGSVSSLNSTGSLS) show a composition bias toward low complexity. 2 consecutive EF-hand domains span residues 272 to 307 (ADKM…SGLT) and 308 to 341 (QNLL…IQQK). Positions 273-363 (DKMRFDEIFL…PDMVPPSERG (91 aa)) constitute an EH 3 domain. Serine 360 bears the Phosphoserine mark. Threonine 364 is modified (phosphothreonine). Residues serine 369 and serine 375 each carry the phosphoserine modification. Residues 384 to 551 (LDDISQEIAQ…RSKLSQLQES (168 aa)) adopt a coiled-coil conformation. A Phosphoserine modification is found at serine 558. Tyrosine 562 is modified (phosphotyrosine). Serine 610 carries the phosphoserine modification. Residues 611–860 (QELHPDPFQA…SSSGFADFTS (250 aa)) are disordered. A compositionally biased stretch (basic and acidic residues) spans 622 to 636 (DPFKSDPFKGADPFK). The span at 643–652 (DPFSEQQTAA) shows a compositional bias: polar residues. Residues serine 664, serine 670, serine 695, serine 715, and serine 732 each carry the phosphoserine modification. The segment covering 682–696 (NDPFTSDPFTKNPSL) has biased composition (polar residues). The segment covering 703 to 743 (FESSDPFSSSSISSKGSDPFGTLDPFGSSSFSSAEGFADFS) has biased composition (low complexity). The span at 776–790 (ALPPKKPAPPRPKPP) shows a compositional bias: pro residues. A Phosphoserine modification is found at serine 791. A compositionally biased stretch (polar residues) spans 791–802 (SGQSTPVSQLGS). Threonine 795 is modified (phosphothreonine). Low complexity predominate over residues 840 to 853 (APSSSAKPPKTSSS). 2 consecutive UIM domains span residues 863-882 (NEEQ…EQER) and 889-907 (QEQE…DMPA).

Interacts with EPS15, AGFG1/HRB and AGFG2/HRBL. Associates with the clathrin-associated adapter protein complex 2 (AP-2). Interacts with FCHO1. Interacts with FCHO2. Interacts (via EH domains) with DAB2. Interacts with UBQLN1 (via ubiquitin-like domain). Interacts with CAVIN3 (via leucine-zipper domain). Interacts with REPS2. Post-translationally, phosphorylated on tyrosine residues by EGFR.

The protein resides in the cell membrane. It is found in the nucleus. The protein localises to the membrane. It localises to the coated pit. Its function is as follows. Seems to be a constitutive component of clathrin-coated pits that is required for receptor-mediated endocytosis. Involved in endocytosis of integrin beta-1 (ITGB1) and transferrin receptor (TFR); internalization of ITGB1 as DAB2-dependent cargo but not TFR seems to require association with DAB2. The polypeptide is Epidermal growth factor receptor substrate 15-like 1 (Eps15l1) (Mus musculus (Mouse)).